The following is a 407-amino-acid chain: Argininosuccinate synthase (407 aa).

Residue 10-18 participates in ATP binding; sequence AYSGGLDTS. L-citrulline-binding residues include Tyr88 and Ser93. Position 118 (Gly118) interacts with ATP. 3 residues coordinate L-aspartate: Thr120, Asn124, and Asp125. Residue Asn124 coordinates L-citrulline. 5 residues coordinate L-citrulline: Arg128, Ser177, Ser186, Glu263, and Tyr275.

The protein belongs to the argininosuccinate synthase family. Type 1 subfamily. Homotetramer.

The protein resides in the cytoplasm. The catalysed reaction is L-citrulline + L-aspartate + ATP = 2-(N(omega)-L-arginino)succinate + AMP + diphosphate + H(+). It functions in the pathway amino-acid biosynthesis; L-arginine biosynthesis; L-arginine from L-ornithine and carbamoyl phosphate: step 2/3. This chain is Argininosuccinate synthase, found in Clostridium botulinum (strain Eklund 17B / Type B).